A 119-amino-acid chain; its full sequence is MSINKNIARLRRAKSTRAHIRELGVARLSVLRTGQHLYAQVFTADGSKVIAAANTLQADVKDGLKNGKNSDAAVKVGKLIAERAKAAGIEKVAFDRSGYRYHGRIKALADAAREGGLQF.

Belongs to the universal ribosomal protein uL18 family. As to quaternary structure, part of the 50S ribosomal subunit; part of the 5S rRNA/L5/L18/L25 subcomplex. Contacts the 5S and 23S rRNAs.

This is one of the proteins that bind and probably mediate the attachment of the 5S RNA into the large ribosomal subunit, where it forms part of the central protuberance. This Xanthomonas campestris pv. campestris (strain 8004) protein is Large ribosomal subunit protein uL18.